A 589-amino-acid polypeptide reads, in one-letter code: CTP synthase (589 aa).

The amidoligase domain stretch occupies residues 1-281 (MPQSRTHSRT…DAYVVRQLGL (281 aa)). CTP is bound at residue Ser23. Ser23 serves as a coordination point for UTP. Residues 24–29 (SLGKGL) and Asp81 contribute to the ATP site. Asp81 and Glu155 together coordinate Mg(2+). CTP-binding positions include 162-164 (DIE), 202-207 (KTKPTQ), and Lys238. Residues 202-207 (KTKPTQ) and Lys238 contribute to the UTP site. Residues 306–554 (RIALVGKYVD…VDAALRHKLE (249 aa)) enclose the Glutamine amidotransferase type-1 domain. Gly369 is a binding site for L-glutamine. Cys396 (nucleophile; for glutamine hydrolysis) is an active-site residue. Residues 397 to 400 (LGLQ), Glu419, and Arg480 each bind L-glutamine. Catalysis depends on residues His527 and Glu529. The disordered stretch occupies residues 562–589 (HGEERAAADDEIAESADRDEVASVDSAG).

This sequence belongs to the CTP synthase family. Homotetramer.

It catalyses the reaction UTP + L-glutamine + ATP + H2O = CTP + L-glutamate + ADP + phosphate + 2 H(+). It carries out the reaction L-glutamine + H2O = L-glutamate + NH4(+). The enzyme catalyses UTP + NH4(+) + ATP = CTP + ADP + phosphate + 2 H(+). It functions in the pathway pyrimidine metabolism; CTP biosynthesis via de novo pathway; CTP from UDP: step 2/2. With respect to regulation, allosterically activated by GTP, when glutamine is the substrate; GTP has no effect on the reaction when ammonia is the substrate. The allosteric effector GTP functions by stabilizing the protein conformation that binds the tetrahedral intermediate(s) formed during glutamine hydrolysis. Inhibited by the product CTP, via allosteric rather than competitive inhibition. Functionally, catalyzes the ATP-dependent amination of UTP to CTP with either L-glutamine or ammonia as the source of nitrogen. Regulates intracellular CTP levels through interactions with the four ribonucleotide triphosphates. The protein is CTP synthase of Rhodococcus opacus (strain B4).